The chain runs to 485 residues: Glutamyl-tRNA(Gln) amidotransferase subunit A (485 aa).

Catalysis depends on charge relay system residues Lys79 and Ser154. Ser178 acts as the Acyl-ester intermediate in catalysis.

It belongs to the amidase family. GatA subfamily. As to quaternary structure, heterotrimer of A, B and C subunits.

The enzyme catalyses L-glutamyl-tRNA(Gln) + L-glutamine + ATP + H2O = L-glutaminyl-tRNA(Gln) + L-glutamate + ADP + phosphate + H(+). Functionally, allows the formation of correctly charged Gln-tRNA(Gln) through the transamidation of misacylated Glu-tRNA(Gln) in organisms which lack glutaminyl-tRNA synthetase. The reaction takes place in the presence of glutamine and ATP through an activated gamma-phospho-Glu-tRNA(Gln). The chain is Glutamyl-tRNA(Gln) amidotransferase subunit A from Staphylococcus haemolyticus (strain JCSC1435).